The primary structure comprises 125 residues: 14 kDa phosphohistidine phosphatase (125 aa).

Alanine 2 bears the N-acetylalanine mark. Substrate is bound at residue lysine 21. Catalysis depends on histidine 53, which acts as the Proton acceptor. 94–96 (SMG) contributes to the substrate binding site.

As to quaternary structure, monomer.

Its subcellular location is the cytoplasm. The catalysed reaction is N(pros)-phospho-L-histidyl-[protein] + H2O = L-histidyl-[protein] + phosphate. It carries out the reaction N(tele)-phospho-L-histidyl-[protein] + H2O = L-histidyl-[protein] + phosphate. Its function is as follows. Exhibits phosphohistidine phosphatase activity. In terms of biological role, may have a significant involvement in neuronal signaling. This is 14 kDa phosphohistidine phosphatase (PHPT1) from Oryctolagus cuniculus (Rabbit).